A 401-amino-acid polypeptide reads, in one-letter code: L-rhamnonate dehydratase (401 aa).

Positions 29 and 55 each coordinate substrate. Mg(2+) is bound by residues Asp222, Glu248, and Glu276. Residue His325 is the Proton acceptor of the active site. Substrate is bound at residue Glu345.

It belongs to the mandelate racemase/muconate lactonizing enzyme family. RhamD subfamily. As to quaternary structure, homooctamer; tetramer of dimers. It depends on Mg(2+) as a cofactor.

It catalyses the reaction L-rhamnonate = 2-dehydro-3-deoxy-L-rhamnonate + H2O. Functionally, catalyzes the dehydration of L-rhamnonate to 2-keto-3-deoxy-L-rhamnonate (KDR). Can also dehydrate L-lyxonate, L-mannonate and D-gulonate, although less efficiently, but not 2-keto-4-hydroxyheptane-1,7-dioate. This is L-rhamnonate dehydratase (rhmD) from Escherichia coli (strain K12).